The primary structure comprises 253 residues: ABC transporter D-alanine-binding periplasmic protein (253 aa).

Residues 1 to 22 form the signal peptide; the sequence is MLSKKFGLSMIVLGIMSSSAFA. Positions 95, 97, 102, 147, and 191 each coordinate D-alanine.

The protein belongs to the bacterial solute-binding protein 3 family. As to quaternary structure, monomer.

Its subcellular location is the periplasm. Functionally, part of the ABC transporter complex dalSTUV, that imports D-alanine into the cytoplasm. Helps protect the organism from oxidative killing by host neutrophils through sequestration of D-alanine, a substrate that is converted to hydrogen peroxide by the host enzyme DAO (D-amino acid oxidase). DalS shuttles D-alanine from the periplasm to the DalTUV complex situated in the inner membrane and through hydrolysis of ATP, D-alanine is transported across the membrane into the cytoplasm. Not required for the metabolism of D-alanine found in the stem peptide of peptidoglycan. The protein is ABC transporter D-alanine-binding periplasmic protein of Salmonella typhimurium (strain LT2 / SGSC1412 / ATCC 700720).